The chain runs to 436 residues: F-box protein SKIP16 (436 aa).

An F-box; degenerate domain is found at Arg-75–Leu-111. An ApaG domain is found at Val-295–Phe-436.

In terms of assembly, part of a SCF (ASK-cullin-F-box) protein ligase complex. Interacts with SKP1A/ASK1, SKP1B/ASK2, ASK4, ASK11 and ASK13.

It participates in protein modification; protein ubiquitination. Its function is as follows. Component of SCF(ASK-cullin-F-box) E3 ubiquitin ligase complexes, which may mediate the ubiquitination and subsequent proteasomal degradation of target proteins. The sequence is that of F-box protein SKIP16 (SKIP16) from Arabidopsis thaliana (Mouse-ear cress).